The sequence spans 707 residues: Lipase maturation factor 2 (707 aa).

10 helical membrane-spanning segments follow: residues 10 to 30 (AFLW…YVQI), 78 to 98 (MELI…FSCL), 102 to 122 (LVFL…QVFL), 126 to 146 (WDSL…LHAM), 158 to 178 (GVTF…SGVV), 220 to 240 (FSVV…FLPF), 256 to 276 (ILII…VLCC), 309 to 329 (LVSL…VKYF), 358 to 378 (ITFP…LKGM), and 395 to 415 (LQWL…LVPY). The N-linked (GlcNAc...) asparagine glycan is linked to asparagine 483. The chain crosses the membrane as a helical span at residues 634–654 (LLLHSFIFGIFTIYFLQAMFG). The segment at 661–707 (VAKQRHSMPPNEKKKQKPNSGQGESASSKSSGHGTDTVRRNKKNEKS) is disordered. The span at 680-694 (SGQGESASSKSSGHG) shows a compositional bias: low complexity. The segment covering 696 to 707 (DTVRRNKKNEKS) has biased composition (basic and acidic residues).

The protein belongs to the lipase maturation factor family.

Its subcellular location is the endoplasmic reticulum membrane. Functionally, involved in the maturation of specific proteins in the endoplasmic reticulum. This Xenopus laevis (African clawed frog) protein is Lipase maturation factor 2 (lmf2).